A 749-amino-acid polypeptide reads, in one-letter code: EF-hand domain-containing family member C2 (749 aa).

DM10 domains lie at 75–182, 226–368, and 431–538; these read DKQV…RKIG, HGKI…KSKY, and KSNI…EQNT. The region spanning 558–593 is the EF-hand domain; that stretch reads GKSRELKQVFKAADSKHTNMVDYNTFRDILMSLTVG.

In terms of assembly, microtubule inner protein component of sperm flagellar doublet microtubules. Expressed in airway epithelial cells.

It localises to the cytoplasm. Its subcellular location is the cytoskeleton. The protein localises to the cilium axoneme. It is found in the flagellum axoneme. Microtubule inner protein (MIP) part of the dynein-decorated doublet microtubules (DMTs) in cilia axoneme, which is required for motile cilia beating. The polypeptide is EF-hand domain-containing family member C2 (Homo sapiens (Human)).